The primary structure comprises 258 residues: 5'-nucleotidase SurE (258 aa).

A divalent metal cation is bound by residues D8, D9, S40, and N92.

Belongs to the SurE nucleotidase family. A divalent metal cation serves as cofactor.

It localises to the cytoplasm. It carries out the reaction a ribonucleoside 5'-phosphate + H2O = a ribonucleoside + phosphate. Functionally, nucleotidase that shows phosphatase activity on nucleoside 5'-monophosphates. The protein is 5'-nucleotidase SurE of Brucella anthropi (strain ATCC 49188 / DSM 6882 / CCUG 24695 / JCM 21032 / LMG 3331 / NBRC 15819 / NCTC 12168 / Alc 37) (Ochrobactrum anthropi).